The chain runs to 445 residues: tRNA-2-methylthio-N(6)-dimethylallyladenosine synthase (445 aa).

In terms of domain architecture, MTTase N-terminal spans 3-124; the sequence is KNLYIKTYGC…LPELISKIVR (122 aa). Residues C12, C48, C87, C162, C166, and C169 each contribute to the [4Fe-4S] cluster site. The Radical SAM core domain maps to 148–380; the sequence is YPQGASSFIS…QKELMDQQLA (233 aa). In terms of domain architecture, TRAM spans 383 to 445; sequence ESCVGSTIKV…SLNSLTGEIL (63 aa).

This sequence belongs to the methylthiotransferase family. MiaB subfamily. As to quaternary structure, monomer. Requires [4Fe-4S] cluster as cofactor.

The protein localises to the cytoplasm. It catalyses the reaction N(6)-dimethylallyladenosine(37) in tRNA + (sulfur carrier)-SH + AH2 + 2 S-adenosyl-L-methionine = 2-methylsulfanyl-N(6)-dimethylallyladenosine(37) in tRNA + (sulfur carrier)-H + 5'-deoxyadenosine + L-methionine + A + S-adenosyl-L-homocysteine + 2 H(+). Catalyzes the methylthiolation of N6-(dimethylallyl)adenosine (i(6)A), leading to the formation of 2-methylthio-N6-(dimethylallyl)adenosine (ms(2)i(6)A) at position 37 in tRNAs that read codons beginning with uridine. The sequence is that of tRNA-2-methylthio-N(6)-dimethylallyladenosine synthase from Rickettsia akari (strain Hartford).